We begin with the raw amino-acid sequence, 428 residues long: Glutamate-1-semialdehyde 2,1-aminomutase (428 aa).

Lys-267 bears the N6-(pyridoxal phosphate)lysine mark.

This sequence belongs to the class-III pyridoxal-phosphate-dependent aminotransferase family. HemL subfamily. As to quaternary structure, homodimer. The cofactor is pyridoxal 5'-phosphate.

The protein localises to the cytoplasm. The catalysed reaction is (S)-4-amino-5-oxopentanoate = 5-aminolevulinate. The protein operates within porphyrin-containing compound metabolism; protoporphyrin-IX biosynthesis; 5-aminolevulinate from L-glutamyl-tRNA(Glu): step 2/2. Its pathway is porphyrin-containing compound metabolism; chlorophyll biosynthesis. The sequence is that of Glutamate-1-semialdehyde 2,1-aminomutase from Prochlorococcus marinus (strain MIT 9303).